Reading from the N-terminus, the 1308-residue chain is Cilia- and flagella-associated protein 57 C (1308 aa).

WD repeat units follow at residues 57–99 (NEYR…RRKN), 110–154 (YNIK…KCLG), 415–454 (NHTGPINSMDICKRKPIIATCSTDKTIKIWDYEKKQIKIS), 504–546 (SPFK…NPSQ), 551–590 (GHTGRVKCIAWSSDDSFLLSCGLDGMILAWKLDQDFQHQQ), 645–689 (LLDI…GKFT), and 694–733 (HDERGVEKMKITNDDRYIITAGKDGCIMVFEIKDKDARGM). Residues 779–1000 (LNSRDDRIRQ…RDKIDGQKKI (222 aa)) are a coiled coil.

This sequence belongs to the CFAP57 family. Forms a heterodimer with CFAP57A. Associates with components of the nexin-dynein regulatory complex (N-DRC) and the CFAP184:CFAP263 complex.

It localises to the cell projection. It is found in the cilium. Its function is as follows. Associates with components of the nexin-dynein regulatory complex (N-DRC), a key regulator of ciliary/flagellar motility, and might act as an inner dynein arm (IDA) hub or linkage. The polypeptide is Cilia- and flagella-associated protein 57 C (CFAP57C) (Tetrahymena thermophila (strain SB210)).